The primary structure comprises 908 residues: Metabotropic glutamate receptor 8 (908 aa).

Positions 1–33 (MVCEGKRLASCPCFFLLTAKFYWILTMMQRTHS) are cleaved as a signal peptide. Topologically, residues 34-583 (QEYAHSIRVD…IIKLEWHSPW (550 aa)) are extracellular. A disulfide bridge connects residues Cys-64 and Cys-106. N-linked (GlcNAc...) asparagine glycosylation is present at Asn-95. L-glutamate-binding positions include Ser-156, 177–179 (AST), and Tyr-227. 7 disulfides stabilise this stretch: Cys-246–Cys-534, Cys-369–Cys-384, Cys-424–Cys-431, Cys-516–Cys-535, Cys-520–Cys-538, Cys-541–Cys-553, and Cys-556–Cys-569. An N-linked (GlcNAc...) asparagine glycan is attached at Asn-298. Asp-309 is a binding site for L-glutamate. Lys-401 is an L-glutamate binding site. Asn-452 and Asn-480 each carry an N-linked (GlcNAc...) asparagine glycan. The N-linked (GlcNAc...) asparagine glycan is linked to Asn-565. The helical transmembrane segment at 584–608 (AVVPVFIAILGIIATTFVIVTFVRY) threads the bilayer. The Cytoplasmic segment spans residues 609-620 (NDTPIVRASGRE). Residues 621–641 (LSYVLLTGIFLCYSITFLMIA) form a helical membrane-spanning segment. Over 642 to 647 (APDTII) the chain is Extracellular. Residues 648 to 668 (CSFRRIFLGLGMCFSYAALLT) form a helical membrane-spanning segment. The Cytoplasmic portion of the chain corresponds to 669 to 695 (KTNRIHRIFEQGKKSVTAPKFISPASQ). The chain crosses the membrane as a helical span at residues 696 to 716 (LVITFSLISVQLLGVFVWFVV). Topologically, residues 717-746 (DPPHTIIDYGEQRTLDPENARGVLKCDISD) are extracellular. Residues 747 to 768 (LSLICSLGYSILLMVTCTVYAI) traverse the membrane as a helical segment. The Cytoplasmic portion of the chain corresponds to 769–781 (KTRGVPETFNEAK). A helical membrane pass occupies residues 782–803 (PIGFTMYTTCIIWLAFIPIFFG). Topologically, residues 804–818 (TAQSAEKMYIQTTTL) are extracellular. The chain crosses the membrane as a helical span at residues 819-843 (TVSMSLSASVSLGMLYMPKVYIIIF). Residues 844-908 (HPEQNVQKRK…TYISYSNHSI (65 aa)) are Cytoplasmic-facing. Lys-882 participates in a covalent cross-link: Glycyl lysine isopeptide (Lys-Gly) (interchain with G-Cter in SUMO1).

The protein belongs to the G-protein coupled receptor 3 family. As to quaternary structure, interacts with PICK1. Prominent expression in olfactory bulb, pontine gray, lateral reticular nucleus of the thalamus, and piriform cortex. Less abundant expression incerebral cortex, hippocampus, cerebellum, and mammillary body.

The protein localises to the cell membrane. Functionally, G-protein coupled receptor for glutamate. Ligand binding causes a conformation change that triggers signaling via guanine nucleotide-binding proteins (G proteins) and modulates the activity of down-stream effectors. Signaling inhibits adenylate cyclase activity. This Rattus norvegicus (Rat) protein is Metabotropic glutamate receptor 8 (Grm8).